We begin with the raw amino-acid sequence, 299 residues long: Oxygen-dependent coproporphyrinogen-III oxidase (299 aa).

Serine 92 contributes to the substrate binding site. 2 residues coordinate a divalent metal cation: histidine 96 and histidine 106. The Proton donor role is filled by histidine 106. Position 108-110 (108-110 (NVR)) interacts with substrate. Histidine 145 and histidine 175 together coordinate a divalent metal cation. The tract at residues 240-275 (YVEFNLVWDRGTLFGLQTGGRTESILMSMPPLVRWE) is important for dimerization. 258–260 (GGR) serves as a coordination point for substrate.

Belongs to the aerobic coproporphyrinogen-III oxidase family. In terms of assembly, homodimer. A divalent metal cation is required as a cofactor.

It is found in the cytoplasm. The catalysed reaction is coproporphyrinogen III + O2 + 2 H(+) = protoporphyrinogen IX + 2 CO2 + 2 H2O. It participates in porphyrin-containing compound metabolism; protoporphyrin-IX biosynthesis; protoporphyrinogen-IX from coproporphyrinogen-III (O2 route): step 1/1. Functionally, involved in the heme biosynthesis. Catalyzes the aerobic oxidative decarboxylation of propionate groups of rings A and B of coproporphyrinogen-III to yield the vinyl groups in protoporphyrinogen-IX. In Salmonella enteritidis PT4 (strain P125109), this protein is Oxygen-dependent coproporphyrinogen-III oxidase.